The sequence spans 90 residues: MANHKSAQKRIRQTKTRTERNRYYKTRIKNIVRDLREAVLNKDVAKAQEALKIANKELHKYVSKGILKKNTAARKVSRLNASVKKIAQSA.

Basic residues predominate over residues 1 to 15 (MANHKSAQKRIRQTK). The tract at residues 1–22 (MANHKSAQKRIRQTKTRTERNR) is disordered.

Belongs to the bacterial ribosomal protein bS20 family.

Functionally, binds directly to 16S ribosomal RNA. This chain is Small ribosomal subunit protein bS20, found in Helicobacter hepaticus (strain ATCC 51449 / 3B1).